Reading from the N-terminus, the 349-residue chain is 1-acylglycerol-3-phosphate O-acyltransferase ABHD5 (349 aa).

Residue alanine 2 is modified to N-acetylalanine. One can recognise an AB hydrolase-1 domain in the interval 77 to 184; it reads PLVLLHGFGG…LVEPWGFPER (108 aa). Serine 122 is modified (phosphoserine). The HXXXXD motif motif lies at 327 to 332; the sequence is HYVYAD.

This sequence belongs to the peptidase S33 family. ABHD4/ABHD5 subfamily. Interacts with ADRP, PLIN and PNPLA2. Interacts with PLIN5; promotes interaction with PNPLA2. In terms of tissue distribution, widely expressed in various tissues, including lymphocytes, liver, skeletal muscle and brain. Expressed by upper epidermal layers and dermal fibroblasts in skin, hepatocytes and neurons (at protein level).

It is found in the cytoplasm. The protein localises to the lipid droplet. It localises to the cytosol. It carries out the reaction a 1-acyl-sn-glycero-3-phosphate + an acyl-CoA = a 1,2-diacyl-sn-glycero-3-phosphate + CoA. It catalyses the reaction 1-(9Z-octadecenoyl)-sn-glycero-3-phosphate + hexadecanoyl-CoA = 1-(9Z)-octadecenoyl-2-hexadecanoyl-sn-glycero-3-phosphate + CoA. The catalysed reaction is 1-(9Z-octadecenoyl)-sn-glycero-3-phosphate + octadecanoyl-CoA = 1-(9Z-octadecenoyl)-2-octadecanoyl-sn-glycero-3-phosphate + CoA. The enzyme catalyses 1-(9Z-octadecenoyl)-sn-glycero-3-phosphate + (9Z)-octadecenoyl-CoA = 1,2-di-(9Z-octadecenoyl)-sn-glycero-3-phosphate + CoA. It carries out the reaction 1-(9Z-octadecenoyl)-sn-glycero-3-phosphate + (5Z,8Z,11Z,14Z)-eicosatetraenoyl-CoA = 1-(9Z)-octadecenoyl-2-(5Z,8Z,11Z,14Z)-eicosatetraenoyl-sn-glycero-3-phosphate + CoA. It catalyses the reaction eicosanoyl-CoA + 1-(9Z-octadecenoyl)-sn-glycero-3-phosphate = 1-(9Z)-octadecenoyl-2-eicosanoyl-sn-glycero-3-phosphate + CoA. The catalysed reaction is 1-hexadecanoyl-sn-glycero-3-phosphate + (9Z)-octadecenoyl-CoA = 1-hexadecanoyl-2-(9Z-octadecenoyl)-sn-glycero-3-phosphate + CoA. The enzyme catalyses 1-octadecanoyl-sn-glycero-3-phosphate + (9Z)-octadecenoyl-CoA = 1-octadecanoyl-2-(9Z-octadecenoyl)-sn-glycero-3-phosphate + CoA. It carries out the reaction 1-(5Z,8Z,11Z,14Z-eicosatetraenoyl)-sn-glycero-3-phosphate + (9Z)-octadecenoyl-CoA = 1-(5Z,8Z,11Z,14Z)-eicosatetraenoyl-2-(9Z)-octadecenoyl-sn-glycero-3-phosphate + CoA. Its activity is regulated as follows. Acyltransferase activity is inhibited by detergents such as Triton X-100 and 3-[(3-cholamidopropyl)dimethylammonio]-1-propanesulfonate (CHAPS). Acyltransferase activity is inhibited by the presence of magnesium and calcium. Its function is as follows. Coenzyme A-dependent lysophosphatidic acid acyltransferase that catalyzes the transfer of an acyl group on a lysophosphatidic acid. Functions preferentially with 1-oleoyl-lysophosphatidic acid followed by 1-palmitoyl-lysophosphatidic acid, 1-stearoyl-lysophosphatidic acid and 1-arachidonoyl-lysophosphatidic acid as lipid acceptor. Functions preferentially with arachidonoyl-CoA followed by oleoyl-CoA as acyl group donors. Functions in phosphatidic acid biosynthesis. May regulate the cellular storage of triacylglycerol through activation of the phospholipase PNPLA2. Involved in keratinocyte differentiation. Regulates lipid droplet fusion. This is 1-acylglycerol-3-phosphate O-acyltransferase ABHD5 from Homo sapiens (Human).